Reading from the N-terminus, the 441-residue chain is uncharacterized protein (441 aa).

Position 57–64 (57–64 (GVRRGGKT)) interacts with ATP.

This is an uncharacterized protein from Methanocaldococcus jannaschii (strain ATCC 43067 / DSM 2661 / JAL-1 / JCM 10045 / NBRC 100440) (Methanococcus jannaschii).